The sequence spans 129 residues: Keratin-associated protein 5-6 (129 aa).

6 repeat units span residues 28 to 31 (CCVP), 34 to 37 (CCKP), 40 to 43 (CCVP), 90 to 93 (CCKP), 109 to 112 (CCKP), and 119 to 122 (CCVP). A 6 X 4 AA repeats of C-C-X-P region spans residues 28 to 112 (CCVPICCCKP…SCCQSSCCKP (85 aa)).

It belongs to the KRTAP type 5 family. Interacts with hair keratins. As to expression, expressed in hair root and not in skin. Expressed also in liver and skeletal muscle.

In the hair cortex, hair keratin intermediate filaments are embedded in an interfilamentous matrix, consisting of hair keratin-associated protein (KRTAP), which are essential for the formation of a rigid and resistant hair shaft through their extensive disulfide bond cross-linking with abundant cysteine residues of hair keratins. The matrix proteins include the high-sulfur and high-glycine-tyrosine keratins. The chain is Keratin-associated protein 5-6 (KRTAP5-6) from Homo sapiens (Human).